We begin with the raw amino-acid sequence, 1146 residues long: Killer toxin subunits alpha/beta (1146 aa).

The signal sequence occupies residues 1 to 17; sequence MNIFYIFLFLLSFVQGL. Positions 18–29 are excised as a propeptide; sequence EHTHRRGSLVKR. LysM domains lie at 205-234 and 254-303; these read ADQSGINGESLQGYNPNLDFSKLSAGQPIC and KTYK…NLCV. The 57-residue stretch at 316–372 folds into the Chitin-binding type-1 domain; it reads IAECGPLAPGEKYNAKCPLNACCSEFGFCGLTKDYCDKKSSTTGAPGTDGCFSNCGY. Cystine bridges form between cysteine 319–cysteine 338, cysteine 332–cysteine 344, cysteine 337–cysteine 351, and cysteine 366–cysteine 370. The GH18 domain occupies 383 to 735; that stretch reads FKKIAYWLDA…DDTEDPFDEE (353 aa). Residues isoleucine 424 and 447 to 450 contribute to the chitin site; that span reads GGWD. The active-site Proton donor is glutamate 495. Chitin contacts are provided by residues tyrosine 496, 562-565, and tryptophan 707; that span reads MTYD. Asparagine 771, asparagine 858, asparagine 868, asparagine 876, and asparagine 1117 each carry an N-linked (GlcNAc...) asparagine glycan.

Belongs to the glycosyl hydrolase 18 family. The killer toxin is composed of three subunits: alpha, beta and gamma. RF2 is potentially split by membrane-bound basic amino acid-specific peptidase to yield the alpha and beta subunits.

The catalysed reaction is Random endo-hydrolysis of N-acetyl-beta-D-glucosaminide (1-&gt;4)-beta-linkages in chitin and chitodextrins.. Functionally, the alpha subunit is a potent exochitinase. Along with the beta subunit it plays a role in the initial interaction of the toxin with sensitive cells and allow the gamma subunit (the active toxin) to gain entry into the cell. In Kluyveromyces lactis (strain ATCC 8585 / CBS 2359 / DSM 70799 / NBRC 1267 / NRRL Y-1140 / WM37) (Yeast), this protein is Killer toxin subunits alpha/beta.